We begin with the raw amino-acid sequence, 161 residues long: Small ribosomal subunit protein eS6 (161 aa).

The segment at 119 to 161 is disordered; that stretch reads VLLGEEEPEDADDDGDSDVDADEATDTDAGSEEDNDDDIADAE. The span at 122–161 shows a compositional bias: acidic residues; sequence GEEEPEDADDDGDSDVDADEATDTDAGSEEDNDDDIADAE.

The protein belongs to the eukaryotic ribosomal protein eS6 family.

The protein is Small ribosomal subunit protein eS6 of Haloquadratum walsbyi (strain DSM 16790 / HBSQ001).